Consider the following 217-residue polypeptide: Ras-like protein (217 aa).

17-24 (GGGGVGKS) provides a ligand contact to GTP. The Effector region signature appears at 39 to 47 (YDPTIEDSY). GTP is bound by residues 64-68 (DTAGQ) and 123-126 (NKCD). The segment at 181 to 200 (TGRMMTGGGGGGPPGTYAGK) is disordered. Gly residues predominate over residues 185-194 (MTGGGGGGPP). S-palmitoyl cysteine attachment occurs at residues Cys-210 and Cys-211. A Cysteine methyl ester modification is found at Cys-214. Residue Cys-214 is the site of S-geranylgeranyl cysteine attachment. Residues 215–217 (VVL) constitute a propeptide, removed in mature form.

Belongs to the small GTPase superfamily. Ras family.

Its subcellular location is the cell membrane. It catalyses the reaction GTP + H2O = GDP + phosphate + H(+). Alternates between an inactive form bound to GDP and an active form bound to GTP. Activated by a guanine nucleotide-exchange factor (GEF) and inactivated by a GTPase-activating protein (GAP). The polypeptide is Ras-like protein (Lentinula edodes (Shiitake mushroom)).